The primary structure comprises 916 residues: Protein translocase subunit SecA (916 aa).

Residues Gln-87, 105–109, and Asp-507 each bind ATP; that span reads GEGKT. Zn(2+) is bound by residues Cys-900, Cys-902, Cys-911, and His-912.

This sequence belongs to the SecA family. In terms of assembly, monomer and homodimer. Part of the essential Sec protein translocation apparatus which comprises SecA, SecYEG and auxiliary proteins SecDF-YajC and YidC. Zn(2+) is required as a cofactor.

It localises to the cell inner membrane. It is found in the cytoplasm. It carries out the reaction ATP + H2O + cellular proteinSide 1 = ADP + phosphate + cellular proteinSide 2.. Its function is as follows. Part of the Sec protein translocase complex. Interacts with the SecYEG preprotein conducting channel. Has a central role in coupling the hydrolysis of ATP to the transfer of proteins into and across the cell membrane, serving both as a receptor for the preprotein-SecB complex and as an ATP-driven molecular motor driving the stepwise translocation of polypeptide chains across the membrane. The sequence is that of Protein translocase subunit SecA from Neisseria meningitidis serogroup A / serotype 4A (strain DSM 15465 / Z2491).